The sequence spans 128 residues: Histone H2A.2 (128 aa).

Belongs to the histone H2A family. The nucleosome is a histone octamer containing two molecules each of H2A, H2B, H3 and H4 assembled in one H3-H4 heterotetramer and two H2A-H2B heterodimers. The octamer wraps approximately 147 bp of DNA. In terms of tissue distribution, expressed in the generative cell within the bicellular pollen. Not detected in other reproductive or vegetative tissues.

It localises to the nucleus. Its subcellular location is the chromosome. Core component of nucleosome. Nucleosomes wrap and compact DNA into chromatin, limiting DNA accessibility to the cellular machineries which require DNA as a template. Histones thereby play a central role in transcription regulation, DNA repair, DNA replication and chromosomal stability. DNA accessibility is regulated via a complex set of post-translational modifications of histones, also called histone code, and nucleosome remodeling. May be involved in the repression of gene expression in male gametes. The polypeptide is Histone H2A.2 (gH2A) (Lilium longiflorum (Trumpet lily)).